The sequence spans 415 residues: MERIIGGKYKLGRKIGGGSFGEIFLATHVDTFEIVAVKIENSKTKHPQLLYEAKLYRILEGGSGIPRIKWFGVDGTENALVMDLLGPSLEDLFVYCGRKFSPKTVLMLADQMLTRIEFVHSKGYLHRDIKPDNFLMGLGRKANQVYLIDFGLAKRYRDANTNRHIPYRENKNLTGTARYASCNTHLGIEQSRRDDLESLGYVLLYFLRGSLPWQGLKAVDKKQKYDKICEKKISTPIEVLCKNHPVEFASYFHYCHTLTFDQRPDYGFLKRLFRDLFSREGYEFDYIFDWTIIKYQQAQKSRNQSQAVPGSSNPRAMPVDTSNHRGGPNISYEAEASERVRSANAIGPSPQINNNTAAGRTPGFDHPVHKNMNMPSTSLSPAGTSKRNVGPETSNSGYGSGNRTGWTSSFMSPEK.

The 269-residue stretch at 9–277 folds into the Protein kinase domain; sequence YKLGRKIGGG…FLKRLFRDLF (269 aa). Residues 15 to 23 and Lys38 contribute to the ATP site; that span reads IGGGSFGEI. Asp128 functions as the Proton acceptor in the catalytic mechanism. Polar residues-rich tracts occupy residues 303–314 and 373–415; these read NQSQAVPGSSNP and NMPS…SPEK. Disordered stretches follow at residues 303–330 and 344–415; these read NQSQAVPGSSNPRAMPVDTSNHRGGPNI and NAIG…SPEK.

Belongs to the protein kinase superfamily. CK1 Ser/Thr protein kinase family. Casein kinase I subfamily. Slightly autophosphorylated. Expressed in seedlings, stems, leaves and flowers.

It is found in the cytoplasm. It localises to the nucleus. The enzyme catalyses L-seryl-[protein] + ATP = O-phospho-L-seryl-[protein] + ADP + H(+). It catalyses the reaction L-threonyl-[protein] + ATP = O-phospho-L-threonyl-[protein] + ADP + H(+). In terms of biological role, protein kinase involved in blue light responses (e.g. hypocotyl elongation and flowering) by phosphorylating CRY2 to reduce its stability. The chain is Casein kinase 1-like protein 3 from Arabidopsis thaliana (Mouse-ear cress).